We begin with the raw amino-acid sequence, 195 residues long: Ribonuclease HII (195 aa).

Residues 6-195 form the RNase H type-2 domain; that stretch reads SLIAGVDEVG…KSFISRLKKN (190 aa). Asp-12, Glu-13, and Asp-108 together coordinate a divalent metal cation.

This sequence belongs to the RNase HII family. Mn(2+) serves as cofactor. The cofactor is Mg(2+).

The protein localises to the cytoplasm. The catalysed reaction is Endonucleolytic cleavage to 5'-phosphomonoester.. Functionally, endonuclease that specifically degrades the RNA of RNA-DNA hybrids. The protein is Ribonuclease HII of Prochlorococcus marinus (strain NATL2A).